The primary structure comprises 595 residues: Torsin-1A-interacting protein 1 (595 aa).

The interval 1–221 is disordered; it reads MAGERWQAEG…GNTKTNEREA (221 aa). The Nuclear segment spans residues 1–351; that stretch reads MAGERWQAEG…NEPSVKIKWW (351 aa). The span at 24–38 shows a compositional bias: basic and acidic residues; it reads PIREGRRRLDPRNGD. Phosphoserine is present on serine 60. Basic and acidic residues-rich tracts occupy residues 70 to 101 and 115 to 132; these read FEPR…EVRE and RAQE…RLEQ. Over residues 133–143 the composition is skewed to polar residues; the sequence is HSQQPQLSPAT. Phosphoserine is present on residues serine 134, serine 140, serine 151, serine 153, serine 154, and serine 155. The segment covering 204–215 has biased composition (polar residues); that stretch reads LDSTYQTNGNTK. Threonine 235 carries the post-translational modification Phosphothreonine. Phosphoserine is present on residues serine 241, serine 244, and serine 255. Disordered stretches follow at residues 250 to 286 and 319 to 340; these read ARSS…PAHE and IQKS…AIHH. The span at 251-262 shows a compositional bias: basic and acidic residues; the sequence is RSSDSLESRDEA. Residues 319 to 335 are compositionally biased toward polar residues; that stretch reads IQKSNFGNQSPSTSRPQ. Residue lysine 321 forms a Glycyl lysine isopeptide (Lys-Gly) (interchain with G-Cter in SUMO2) linkage. Serine 328 bears the Phosphoserine mark. The helical transmembrane segment at 352–372 threads the bilayer; sequence LLGLVAILAVGLFWFFHTPAV. Residues 368–595 form an interaction with TOR1A region; the sequence is HTPAVETTAV…ENTLKAGSCL (228 aa). Residues 373–400 adopt a coiled-coil conformation; sequence ETTAVQEFQNQMKQLQSKYQSQNEKLWK. Topologically, residues 373–595 are perinuclear space; sequence ETTAVQEFQN…ENTLKAGSCL (223 aa). Asparagine 411 is a glycosylation site (N-linked (GlcNAc...) asparagine).

Belongs to the TOR1AIP family. Interacts with ATP1B4. Interacts with TOR1A (ATP-bound). Interacts with TOR1B, TOR2A and TOR3A. Interacts with VIM. As to expression, expressed in the spinal cord and liver (at protein level).

The protein resides in the nucleus inner membrane. In terms of biological role, required for nuclear membrane integrity. Induces TOR1A and TOR1B ATPase activity and is required for their location on the nuclear membrane. Binds to A- and B-type lamins. Possible role in membrane attachment and assembly of the nuclear lamina. This chain is Torsin-1A-interacting protein 1 (Tor1aip1), found in Mus musculus (Mouse).